Reading from the N-terminus, the 283-residue chain is NAD kinase (283 aa).

Aspartate 73 functions as the Proton acceptor in the catalytic mechanism. NAD(+) is bound by residues 73 to 74 (DG), 146 to 147 (NE), histidine 157, histidine 176, aspartate 178, 189 to 194 (TAYNLS), and alanine 213.

It belongs to the NAD kinase family. The cofactor is a divalent metal cation.

The protein localises to the cytoplasm. The catalysed reaction is NAD(+) + ATP = ADP + NADP(+) + H(+). In terms of biological role, involved in the regulation of the intracellular balance of NAD and NADP, and is a key enzyme in the biosynthesis of NADP. Catalyzes specifically the phosphorylation on 2'-hydroxyl of the adenosine moiety of NAD to yield NADP. The protein is NAD kinase of Haloarcula marismortui (strain ATCC 43049 / DSM 3752 / JCM 8966 / VKM B-1809) (Halobacterium marismortui).